Consider the following 107-residue polypeptide: Protein phosphatase 1 regulatory subunit INH3 (107 aa).

Positions M1 to S14 are enriched in low complexity. Disordered regions lie at residues M1 to K40 and P69 to D107. Acidic residues predominate over residues D71–D80. Residues N81–S94 show a composition bias toward basic and acidic residues. Over residues G95–D107 the composition is skewed to low complexity.

Interacts with protein phosphatase 1. Expressed in roots, cotyledons, leaves, flowers and embryos.

Functionally, inhibitor of protein-phosphatase 1 (PP1). Binds to and inhibits PP1 activity. Required for early embryogenesis progression. The protein is Protein phosphatase 1 regulatory subunit INH3 of Arabidopsis thaliana (Mouse-ear cress).